The following is a 246-amino-acid chain: Flavin-dependent thymidylate synthase (246 aa).

Positions 17-241 (ITVELVKSAA…PLTHAAFNAN (225 aa)) constitute a ThyX domain. Residues serine 69, 92-94 (RHR), and glutamate 101 each bind FAD. Residues 89–92 (EFMR), 101–105 (EESGR), and arginine 173 each bind dUMP. A ThyX motif motif is present at residues 92 to 103 (RHRVGWSYNEES). FAD contacts are provided by residues 189–191 (NAR) and histidine 195. Arginine 200 contacts dUMP. The active-site Involved in ionization of N3 of dUMP, leading to its activation is the arginine 200.

It belongs to the thymidylate synthase ThyX family. In terms of assembly, homotetramer. Requires FAD as cofactor.

The catalysed reaction is dUMP + (6R)-5,10-methylene-5,6,7,8-tetrahydrofolate + NADPH + H(+) = dTMP + (6S)-5,6,7,8-tetrahydrofolate + NADP(+). The protein operates within pyrimidine metabolism; dTTP biosynthesis. In terms of biological role, catalyzes the reductive methylation of 2'-deoxyuridine-5'-monophosphate (dUMP) to 2'-deoxythymidine-5'-monophosphate (dTMP) while utilizing 5,10-methylenetetrahydrofolate (mTHF) as the methyl donor, and NADPH and FADH(2) as the reductant. This chain is Flavin-dependent thymidylate synthase, found in Streptomyces coelicolor (strain ATCC BAA-471 / A3(2) / M145).